Consider the following 295-residue polypeptide: tRNA dimethylallyltransferase (295 aa).

9–16 contacts ATP; sequence GATATGKS. Substrate is bound at residue 11–16; it reads TATGKS. Positions 34–37 are interaction with substrate tRNA; that stretch reads DSRQ.

This sequence belongs to the IPP transferase family. In terms of assembly, monomer. Mg(2+) is required as a cofactor.

It catalyses the reaction adenosine(37) in tRNA + dimethylallyl diphosphate = N(6)-dimethylallyladenosine(37) in tRNA + diphosphate. Its function is as follows. Catalyzes the transfer of a dimethylallyl group onto the adenine at position 37 in tRNAs that read codons beginning with uridine, leading to the formation of N6-(dimethylallyl)adenosine (i(6)A). The polypeptide is tRNA dimethylallyltransferase (Nostoc sp. (strain PCC 7120 / SAG 25.82 / UTEX 2576)).